The chain runs to 239 residues: AA9 family lytic polysaccharide monooxygenase C (239 aa).

Position 1 (histidine 1) interacts with Cu(2+). Cysteine 39 and cysteine 190 are oxidised to a cystine. The N-linked (GlcNAc...) asparagine glycan is linked to asparagine 75. Position 84 (histidine 84) interacts with Cu(2+). A glycan (N-linked (GlcNAc...) asparagine) is linked at asparagine 135. O2 contacts are provided by histidine 157 and glutamine 166. Tyrosine 168 provides a ligand contact to Cu(2+). 2 N-linked (GlcNAc...) asparagine glycosylation sites follow: asparagine 194 and asparagine 229.

Belongs to the polysaccharide monooxygenase AA9 family. Requires Cu(2+) as cofactor.

The protein resides in the secreted. The catalysed reaction is [(1-&gt;4)-beta-D-glucosyl]n+m + reduced acceptor + O2 = 4-dehydro-beta-D-glucosyl-[(1-&gt;4)-beta-D-glucosyl]n-1 + [(1-&gt;4)-beta-D-glucosyl]m + acceptor + H2O.. Lytic polysaccharide monooxygenase (LPMO) that depolymerizes crystalline and amorphous polysaccharides via the oxidation of scissile alpha- or beta-(1-4)-glycosidic bonds, yielding C1 or C4 oxidation products. Catalysis by LPMOs requires the reduction of the active-site copper from Cu(II) to Cu(I) by a reducing agent and H(2)O(2) or O(2) as a cosubstrate. The chain is AA9 family lytic polysaccharide monooxygenase C from Gloeophyllum trabeum (Brown rot fungus).